Consider the following 205-residue polypeptide: ITG-like peptide (205 aa).

The signal sequence occupies residues 1–15; sequence MRVYAAITLVLVANT. Propeptides lie at residues 16–188 and 202–205; these read AYIG…TSGE and MPFA.

Expressed throughout the nervous system (at protein level).

Its subcellular location is the secreted. The chain is ITG-like peptide from Camponotus floridanus (Florida carpenter ant).